A 160-amino-acid chain; its full sequence is Fimbrial protein (160 aa).

Residues 1-7 constitute a propeptide, leader sequence; it reads MKSLQKG. N-methylphenylalanine is present on F8. Residues 8-28 form a helical membrane-spanning segment; that stretch reads FTLIELMIVVAIIGILAAFAI.

Belongs to the N-Me-Phe pilin family. In terms of assembly, the pili are polar flexible filaments of about 5.4 nanometers diameter and 2.5 micrometers average length; they consist of only a single polypeptide chain arranged in a helical configuration of five subunits per turn in the assembled pilus.

It localises to the fimbrium. The protein localises to the membrane. This Dichelobacter nodosus (Bacteroides nodosus) protein is Fimbrial protein (fimA).